Here is a 202-residue protein sequence, read N- to C-terminus: Ribonuclease HII (202 aa).

One can recognise an RNase H type-2 domain in the interval 15–202; sequence QGVAGVDEAG…APIKAFGISA (188 aa). A divalent metal cation contacts are provided by aspartate 21, glutamate 22, and aspartate 113.

Belongs to the RNase HII family. Mn(2+) is required as a cofactor. Mg(2+) serves as cofactor.

It is found in the cytoplasm. It carries out the reaction Endonucleolytic cleavage to 5'-phosphomonoester.. In terms of biological role, endonuclease that specifically degrades the RNA of RNA-DNA hybrids. The protein is Ribonuclease HII of Bordetella avium (strain 197N).